Here is a 325-residue protein sequence, read N- to C-terminus: Tagatose 1,6-diphosphate aldolase (325 aa).

This sequence belongs to the aldolase LacD family.

The enzyme catalyses D-tagatofuranose 1,6-bisphosphate = D-glyceraldehyde 3-phosphate + dihydroxyacetone phosphate. The protein operates within carbohydrate metabolism; D-tagatose 6-phosphate degradation; D-glyceraldehyde 3-phosphate and glycerone phosphate from D-tagatose 6-phosphate: step 2/2. The protein is Tagatose 1,6-diphosphate aldolase of Staphylococcus haemolyticus (strain JCSC1435).